The primary structure comprises 157 residues: Large ribosomal subunit protein uL15 (157 aa).

The segment at 1–41 (MKLHELSDNPGATKKRKRVGRGPGSGTGKMGGRGIKGQKSR) is disordered. Residues 21-35 (RGPGSGTGKMGGRGI) are compositionally biased toward gly residues.

Belongs to the universal ribosomal protein uL15 family. Part of the 50S ribosomal subunit.

In terms of biological role, binds to the 23S rRNA. The polypeptide is Large ribosomal subunit protein uL15 (Jannaschia sp. (strain CCS1)).